A 121-amino-acid polypeptide reads, in one-letter code: Basic phospholipase A2 F17 (121 aa).

7 disulfide bridges follow: Cys25/Cys114, Cys27/Cys43, Cys42/Cys94, Cys48/Cys121, Cys49/Cys87, Cys56/Cys80, and Cys74/Cys85. Ca(2+) contacts are provided by Tyr26, Gly28, and Gly30. Residue His46 is part of the active site. Position 47 (Asp47) interacts with Ca(2+). Residue Asp88 is part of the active site.

The protein belongs to the phospholipase A2 family. Group II subfamily. D49 sub-subfamily. As to quaternary structure, when this protein is associated with crotapotin (F5 or F7), it forms the crotoxin protein. Ca(2+) is required as a cofactor. Expressed by the venom gland.

It localises to the secreted. The enzyme catalyses a 1,2-diacyl-sn-glycero-3-phosphocholine + H2O = a 1-acyl-sn-glycero-3-phosphocholine + a fatty acid + H(+). Its activity is regulated as follows. Activated by heparin. Inhibited by its chaperone crotapotin. Snake venom phospholipase A2 (PLA2) that has anticoagulant activity and inhibits bactericial growth of the Gram-negative bacteria Xanthomonas axonopodis pv. passiflorae (in monomeric form). PLA2 catalyzes the calcium-dependent hydrolysis of the 2-acyl groups in 3-sn-phosphoglycerides. The polypeptide is Basic phospholipase A2 F17 (Crotalus durissus terrificus (South American rattlesnake)).